The following is a 215-amino-acid chain: Cytochrome b6 (215 aa).

A helical membrane pass occupies residues 32-52 (IFYCLGGITLVCFLIQFATGF). Cys35 provides a ligand contact to heme c. Heme b contacts are provided by His86 and His100. Transmembrane regions (helical) follow at residues 90–110 (ASMMVLMMILHTFRVYLTGGF), 116–136 (LTWVTGVILAVLTVSFGVTGY), and 186–206 (LHTFVLPWLTAVFMTMHFLMI). Heme b-binding residues include His187 and His202.

Belongs to the cytochrome b family. PetB subfamily. In terms of assembly, the 4 large subunits of the cytochrome b6-f complex are cytochrome b6, subunit IV (17 kDa polypeptide, PetD), cytochrome f and the Rieske protein, while the 4 small subunits are PetG, PetL, PetM and PetN. The complex functions as a dimer. It depends on heme b as a cofactor. Heme c serves as cofactor.

The protein resides in the cellular thylakoid membrane. Component of the cytochrome b6-f complex, which mediates electron transfer between photosystem II (PSII) and photosystem I (PSI), cyclic electron flow around PSI, and state transitions. This is Cytochrome b6 from Synechococcus sp. (strain JA-3-3Ab) (Cyanobacteria bacterium Yellowstone A-Prime).